We begin with the raw amino-acid sequence, 338 residues long: uncharacterized protein (338 aa).

3 helical membrane-spanning segments follow: residues I11–I31, I249–A269, and V318–L338.

The protein resides in the cell membrane. This is an uncharacterized protein from Methanocaldococcus jannaschii (strain ATCC 43067 / DSM 2661 / JAL-1 / JCM 10045 / NBRC 100440) (Methanococcus jannaschii).